The following is a 439-amino-acid chain: 23S rRNA (uracil(1939)-C(5))-methyltransferase RlmD (439 aa).

One can recognise a TRAM domain in the interval 10 to 68 (QKKLRAAFTTIVQDLDYQGLGVAKIQGKTWFIENALPQEQVQVQVIEEKRQYGLGRVQK). Residues C81, C87, C90, and C168 each contribute to the [4Fe-4S] cluster site. 6 residues coordinate S-adenosyl-L-methionine: Q271, F300, N305, E321, D348, and D369. C395 serves as the catalytic Nucleophile.

This sequence belongs to the class I-like SAM-binding methyltransferase superfamily. RNA M5U methyltransferase family. RlmD subfamily.

It catalyses the reaction uridine(1939) in 23S rRNA + S-adenosyl-L-methionine = 5-methyluridine(1939) in 23S rRNA + S-adenosyl-L-homocysteine + H(+). Functionally, catalyzes the formation of 5-methyl-uridine at position 1939 (m5U1939) in 23S rRNA. In Histophilus somni (strain 129Pt) (Haemophilus somnus), this protein is 23S rRNA (uracil(1939)-C(5))-methyltransferase RlmD.